The primary structure comprises 230 residues: MGQKASQQVAPKDSQEVLAMCEVVSAAISHAAQKLKEYLGFEYPLSRLCLAASSLTEVFLVHFVTFCQERGADEWLTTTKMTKHQAWLFGADWIWTFWGPDKQIRLQVAVQTLRMASLPLTDPKSCESRGEESWKKGRFDKLQEFCNLVGEDCLGLFIIFGVPGEPKAIRGVVLESVRNGMMESQLPGRKAVEQFVLETKDCISIKELLGNCLSKRDGLSDMGRVYIRIL.

The N-myristoyl glycine moiety is linked to residue glycine 2.

In terms of assembly, interacts with the GTP-bound form of RAB15, RAB3A-D and RAB34.

The protein resides in the early endosome membrane. Its function is as follows. Effector that interacts with Rab GTPases in their active form (GTP-bound) including RAB15, RAB3A-D and RAB34. Controls downstream signaling such as cell proliferation and cell migration. Also regulates transferrin receptor recycling from the endocytic recycling compartment. The chain is Rab15 effector protein from Mus musculus (Mouse).